The sequence spans 349 residues: 11-beta-hydroxysteroid dehydrogenase A (349 aa).

The chain crosses the membrane as a helical; Signal-anchor for type II membrane protein span at residues 10–30; that stretch reads LVAPPFTFFFLCLFLPPYWGL. The short motif at 13-26 is the Proline-knob element; sequence PPFTFFFLCLFLPP. NADP(+) contacts are provided by residues 54–80, Asp-105, and 132–135; these read GASS…SARR and NAAI. Residue Ser-184 coordinates substrate. Tyr-197 (proton acceptor) is an active-site residue. NADP(+)-binding positions include 197-201 and Lys-201; that span reads YSASK.

This sequence belongs to the short-chain dehydrogenases/reductases (SDR) family. Expressed in seeds (at protein level).

Its subcellular location is the lipid droplet. The protein localises to the membrane. The catalysed reaction is an 11beta-hydroxysteroid + NADP(+) = an 11-oxosteroid + NADPH + H(+). In terms of biological role, has dehydrogenase activity against 11 beta-hydroxysteroid and 17 beta-hydroxysteroid. May be involved in signal transduction regulated by various sterols. The chain is 11-beta-hydroxysteroid dehydrogenase A from Arachis hypogaea (Peanut).